We begin with the raw amino-acid sequence, 206 residues long: LexA repressor (206 aa).

A DNA-binding region (H-T-H motif) is located at residues 28–48 (VREIGQAVGLASSSTVHGHLS). Catalysis depends on for autocatalytic cleavage activity residues Ser-128 and Lys-166.

The protein belongs to the peptidase S24 family. As to quaternary structure, homodimer.

It carries out the reaction Hydrolysis of Ala-|-Gly bond in repressor LexA.. In terms of biological role, represses a number of genes involved in the response to DNA damage (SOS response), including recA and lexA. In the presence of single-stranded DNA, RecA interacts with LexA causing an autocatalytic cleavage which disrupts the DNA-binding part of LexA, leading to derepression of the SOS regulon and eventually DNA repair. In Bacillus thuringiensis (strain Al Hakam), this protein is LexA repressor.